The following is a 455-amino-acid chain: Xylan O-acetyltransferase 3 (455 aa).

Low complexity predominate over residues 1-15 (MSKPQQQSPPSTTTT). The disordered stretch occupies residues 1 to 32 (MSKPQQQSPPSTTTTSPPPPPPSTPPPASSSR). The Cytoplasmic segment spans residues 1–42 (MSKPQQQSPPSTTTTSPPPPPPSTPPPASSSRSLLSALRRSP). Pro residues predominate over residues 16-28 (SPPPPPPSTPPPA). The helical; Signal-anchor for type II membrane protein transmembrane segment at 43–59 (VTTLVAAFFLLALFMYG) threads the bilayer. At 60–455 (EDVRTLAELS…PSTHPSLPPQ (396 aa)) the chain is on the lumenal side. Asn82, Asn107, and Asn146 each carry an N-linked (GlcNAc...) asparagine glycan. Cystine bridges form between Cys96-Cys147, Cys118-Cys183, Cys127-Cys423, and Cys339-Cys419. The GDS motif motif lies at 170–172 (GDS). The Nucleophile role is filled by Ser172. N-linked (GlcNAc...) asparagine glycosylation is found at Asn278 and Asn348. Asp418 acts as the Proton donor in catalysis. The DXXH motif signature appears at 418 to 421 (DCIH). His421 functions as the Proton acceptor in the catalytic mechanism.

This sequence belongs to the PC-esterase family. TBL subfamily. As to expression, highly expressed in leaves. Expressed in roots, stems and inflorescences.

It is found in the golgi apparatus membrane. Xylan acetyltransferase required for 2-O- and 3-O-monoacetylation of xylosyl residues in xylan. Catalyzes the 2-O-acetylation of xylan, followed by nonenzymatic acetyl migration to the O-3 position, resulting in products that are monoacetylated at both O-2 and O-3 positions. In Oryza sativa subsp. japonica (Rice), this protein is Xylan O-acetyltransferase 3.